The primary structure comprises 249 residues: Elsinochromes biosynthesis cluster protein HP3 (249 aa).

N106 is a glycosylation site (N-linked (GlcNAc...) asparagine). The helical transmembrane segment at 138–158 (VVFAFMLSAWLVWLITVYAFA) threads the bilayer.

It is found in the membrane. In terms of biological role, part of the gene cluster that mediates the biosynthesis of elsinochromes, pigments consisting of at least four interconvertible tautomers (A, B, C and D) that have a core phenolic quinone to which various side chains are attached and which play an important role in fungal pathogenesis. The non-reducing polyketide synthase PKS1 was proposed to iteratively catalyze decarboxylation between acetyl-CoA and malonyl-CoA subunits for polyketide chain elongation. The released polyketide undergoes cyclization to form an aromatic ring, and proceeds via serial modification steps to produce the heptaketide back- bone of elsinochrome. As elsinochrome has a symmetrical structure, two identical heptaketides are fused to form a core 1,2-dihydrobenzo-perylene ring structure, which can then be successively modified to produce the various derivatives of elsinochrome. Some of these reactions may be cooperatively carried out, at least in part, by the products of RDT1, OXR1 and PKS1. PRF1, embedded within the elsinochrome cluster possibly functions to stabilize some of the biosynthetic enzymes required for elsinochrome production. As prefoldin is a hexamer containing 2 a and 4 b subunits, additional prefoldin subunits, whose coding genes may not immediately link to the elsinochrome biosynthetic gene cluster, are required to fulfill the chaperone function. In addition, no methyltransferase-coding gene exists within the biosynthetic gene cluster, even though elsinochrome has four methyl groups at positions C3, C7, C8 and C12. Apparently, the identified gene cluster does not contain the entire entourage of genes responsible for elsinochrome biosynthesis. Once elsinochrome is synthesized, it must be exported outside the fungal cells, which is probably accomplished by the ECT1 transporter, to avoid toxicity. In Elsinoe fawcettii (Citrus scab fungus), this protein is Elsinochromes biosynthesis cluster protein HP3.